The chain runs to 62 residues: Small ribosomal subunit protein uS14 (62 aa).

Zn(2+)-binding residues include Cys-25, Cys-28, Cys-41, and Cys-44.

Belongs to the universal ribosomal protein uS14 family. Zinc-binding uS14 subfamily. As to quaternary structure, part of the 30S ribosomal subunit. Contacts proteins S3 and S10. Requires Zn(2+) as cofactor.

Functionally, binds 16S rRNA, required for the assembly of 30S particles and may also be responsible for determining the conformation of the 16S rRNA at the A site. This chain is Small ribosomal subunit protein uS14, found in Persephonella marina (strain DSM 14350 / EX-H1).